Reading from the N-terminus, the 228-residue chain is MKISFHGQSCIKIITGNTTILVDPFISGNEKCDLKAEEQMPDFIVLSHGHDDHVGDTVEIAKNSGATVICNADLASFLAVEDGLENIAAMHIGGKRQFEFGQVKLTQAFHGSQTVRNGRIINLGFPTGVVFTIENKNIYFAGDTGLFSDMKLIGELNPLDVAFLPIGDNFTMGPEDAAIAARFLQTKLVIPMHYNTFPLIEQDPHKFVASLDEGISGKVLEIGESIEI.

It belongs to the UPF0173 family.

This Listeria welshimeri serovar 6b (strain ATCC 35897 / DSM 20650 / CCUG 15529 / CIP 8149 / NCTC 11857 / SLCC 5334 / V8) protein is UPF0173 metal-dependent hydrolase lwe1590.